A 551-amino-acid polypeptide reads, in one-letter code: Chaperonin GroEL (551 aa).

ATP contacts are provided by residues 30–33 (TLGP), K51, 87–91 (DGTTT), G415, and D496.

Belongs to the chaperonin (HSP60) family. As to quaternary structure, forms a cylinder of 14 subunits composed of two heptameric rings stacked back-to-back. Interacts with the co-chaperonin GroES.

The protein resides in the cytoplasm. The catalysed reaction is ATP + H2O + a folded polypeptide = ADP + phosphate + an unfolded polypeptide.. Functionally, together with its co-chaperonin GroES, plays an essential role in assisting protein folding. The GroEL-GroES system forms a nano-cage that allows encapsulation of the non-native substrate proteins and provides a physical environment optimized to promote and accelerate protein folding. The protein is Chaperonin GroEL of Maricaulis maris (strain MCS10) (Caulobacter maris).